A 447-amino-acid chain; its full sequence is Glutamate--tRNA ligase 1 (447 aa).

Residues 10 to 20 carry the 'HIGH' region motif; it reads PSPTGMLHVGN. Positions 240 to 244 match the 'KMSKS' region motif; the sequence is KISKR. Residue lysine 243 coordinates ATP.

This sequence belongs to the class-I aminoacyl-tRNA synthetase family. Glutamate--tRNA ligase type 1 subfamily. Monomer.

Its subcellular location is the cytoplasm. It carries out the reaction tRNA(Glu) + L-glutamate + ATP = L-glutamyl-tRNA(Glu) + AMP + diphosphate. Catalyzes the attachment of glutamate to tRNA(Glu) in a two-step reaction: glutamate is first activated by ATP to form Glu-AMP and then transferred to the acceptor end of tRNA(Glu). This is Glutamate--tRNA ligase 1 from Rickettsia prowazekii (strain Madrid E).